The primary structure comprises 185 residues: Elongation factor P 1 (185 aa).

Belongs to the elongation factor P family.

Its subcellular location is the cytoplasm. It functions in the pathway protein biosynthesis; polypeptide chain elongation. Functionally, involved in peptide bond synthesis. Stimulates efficient translation and peptide-bond synthesis on native or reconstituted 70S ribosomes in vitro. Probably functions indirectly by altering the affinity of the ribosome for aminoacyl-tRNA, thus increasing their reactivity as acceptors for peptidyl transferase. In Chlamydia muridarum (strain MoPn / Nigg), this protein is Elongation factor P 1 (efp1).